Consider the following 285-residue polypeptide: MPAQKIDGKLIAQQVRQHVKSHVESIVSSGKRPPGLAVVLVGSDAASHVYVTNKRRACEEVGFVSKSYDLPSTTSQQKLLELIDTLNADEEIDGILVQLPLPAGLDKEQVLERILPHKDVDGFHPYNIGRLAQRIPALRPCTPKGIMTLIESTKRPIKGLDAVIVGASNIVGRPMFMELLLAGCTVTSCHKFTKDLQSHVERADLIVVAVGISAFIPGEWIKPGAIVIDVGINRQTDGTLIGDVDYATAEKRAGWITPVPGGVGPMTVASLIENTLEAYVKYHSN.

NADP(+) contacts are provided by residues 166 to 168 (GAS) and isoleucine 232.

Belongs to the tetrahydrofolate dehydrogenase/cyclohydrolase family. As to quaternary structure, homodimer.

It catalyses the reaction (6R)-5,10-methylene-5,6,7,8-tetrahydrofolate + NADP(+) = (6R)-5,10-methenyltetrahydrofolate + NADPH. The enzyme catalyses (6R)-5,10-methenyltetrahydrofolate + H2O = (6R)-10-formyltetrahydrofolate + H(+). It participates in one-carbon metabolism; tetrahydrofolate interconversion. Its function is as follows. Catalyzes the oxidation of 5,10-methylenetetrahydrofolate to 5,10-methenyltetrahydrofolate and then the hydrolysis of 5,10-methenyltetrahydrofolate to 10-formyltetrahydrofolate. This Pseudoalteromonas atlantica (strain T6c / ATCC BAA-1087) protein is Bifunctional protein FolD.